The primary structure comprises 233 residues: Metallo-beta-lactamase domain-containing protein 1 (233 aa).

His96, His98, Asp100, His101, His152, Asp174, and His213 together coordinate Zn(2+).

Belongs to the metallo-beta-lactamase superfamily. Glyoxalase II family. Homodimer. It depends on Zn(2+) as a cofactor.

Its subcellular location is the cytoplasm. The protein resides in the cytosol. The protein localises to the nucleus. The enzyme catalyses a ribonucleotidyl-ribonucleotide-RNA + H2O = a 3'-end ribonucleotide-RNA + a 5'-end 5'-phospho-ribonucleoside-RNA + H(+). Functionally, endoribonuclease that catalyzes the hydrolysis of histone-coding pre-mRNA 3'-end. Involved in histone pre-mRNA processing during the S-phase of the cell cycle, which is required for entering/progressing through S-phase. Cleaves histone pre-mRNA at a major and a minor cleavage site after the 5'-ACCCA-3' and the 5'-ACCCACA-3' sequence, respectively, and located downstream of the stem-loop. May require the presence of the HDE element located at the histone pre-RNA 3'-end to avoid non-specific cleavage. This is Metallo-beta-lactamase domain-containing protein 1 (mblac1) from Xenopus laevis (African clawed frog).